Here is a 212-residue protein sequence, read N- to C-terminus: Thymidylate kinase (212 aa).

11–18 (GPDGAGKT) contacts ATP.

The protein belongs to the thymidylate kinase family.

The catalysed reaction is dTMP + ATP = dTDP + ADP. Functionally, phosphorylation of dTMP to form dTDP in both de novo and salvage pathways of dTTP synthesis. The sequence is that of Thymidylate kinase from Streptococcus mutans serotype c (strain ATCC 700610 / UA159).